The following is a 314-amino-acid chain: 3'-5' exoribonuclease YhaM (314 aa).

Positions 14-90 form a DNA-binding region, OB; it reads VDLYLLIKSS…QLKLRNIRPA (77 aa). The HD domain maps to 163–279; that stretch reads HVVSMLNLAK…LHYIDNLDAK (117 aa).

Belongs to the YhaM family.

Shows a 3'-5' exoribonuclease activity. In Bacillus licheniformis (strain ATCC 14580 / DSM 13 / JCM 2505 / CCUG 7422 / NBRC 12200 / NCIMB 9375 / NCTC 10341 / NRRL NRS-1264 / Gibson 46), this protein is 3'-5' exoribonuclease YhaM.